The chain runs to 176 residues: 4-hydroxylaminobenzoate lyase (176 aa).

The protein belongs to the PnbB family.

The catalysed reaction is 4-hydroxylaminobenzoate + H2O + H(+) = 3,4-dihydroxybenzoate + NH4(+). Lyase involved in the degradation of nitroaromatic compounds. Catalyzes the conversion of 4-hydroxylaminobenzoate to 3,4-dihydroxybenzoate (protocatechuate). Required for the catabolism of 4-nitrotoluene. This Pseudomonas putida (Arthrobacter siderocapsulatus) protein is 4-hydroxylaminobenzoate lyase.